We begin with the raw amino-acid sequence, 317 residues long: MTINDSVISEQGMCEEEQVARIAWFYYHDGLTQSEISDRLGLTRLKVSRLLEKGHQSGIIRVQINSRFEGCLEYETQLRRQFSLQHVRVIPGLADADVGGRLGIGAAHMLMSLLQPQQMLAIGFGEATMNTLQRLSGFISSQQIRLVTLSGGVGSYMTGIGQLNAACSVNIIPAPLRASSADIARTLKNENCVKDVLLAAQAADVAIVGIGAVSQQDDATIIRSGYISQGEQLMIGRKGAVGDILGYFFDAKGDVVTDIKIHNELIGLPLSALKTIPVRVGVAGGENKAEAIAAAMKGGYINALVTDQDTAAAILRS.

Positions 33–56 (QSEISDRLGLTRLKVSRLLEKGHQ) form a DNA-binding region, H-T-H motif.

Belongs to the SorC transcriptional regulatory family.

The protein localises to the cytoplasm. With respect to regulation, inactivated by phosphorylated autoinducer-2 (phospho-AI-2). Phospho-AI-2 acts by binding to LsrR, which is then unable to bind to the promoter regions, allowing the transcription of the target genes. Transcriptional regulator that represses the expression of the lsr operon in the absence of the quorum-sensing signaling molecule autoinducer 2 (AI-2). It also represses the expression of the lsrRK operon. Acts by binding directly to the lsrA and lsrR promoter regions. In the presence of phosphorylated autoinducer-2 (phospho-AI-2), LsrR is inactivated, leading to the transcription of the genes. The protein is Transcriptional regulator LsrR (lsrR) of Escherichia coli O157:H7.